A 428-amino-acid chain; its full sequence is Histidine--tRNA ligase (428 aa).

This sequence belongs to the class-II aminoacyl-tRNA synthetase family. As to quaternary structure, homodimer.

The protein resides in the cytoplasm. It catalyses the reaction tRNA(His) + L-histidine + ATP = L-histidyl-tRNA(His) + AMP + diphosphate + H(+). This Lactobacillus delbrueckii subsp. bulgaricus (strain ATCC 11842 / DSM 20081 / BCRC 10696 / JCM 1002 / NBRC 13953 / NCIMB 11778 / NCTC 12712 / WDCM 00102 / Lb 14) protein is Histidine--tRNA ligase.